The sequence spans 61 residues: UPF0434 protein MS0934 (61 aa).

It belongs to the UPF0434 family.

This is UPF0434 protein MS0934 from Mannheimia succiniciproducens (strain KCTC 0769BP / MBEL55E).